We begin with the raw amino-acid sequence, 265 residues long: NAD kinase 2 (265 aa).

Aspartate 51 acts as the Proton acceptor in catalysis. NAD(+) is bound by residues 51–52, 122–123, arginine 149, aspartate 151, 162–167, and alanine 186; these read DG, NE, and TAYNKS.

Belongs to the NAD kinase family. Requires a divalent metal cation as cofactor.

It is found in the cytoplasm. The enzyme catalyses NAD(+) + ATP = ADP + NADP(+) + H(+). Functionally, involved in the regulation of the intracellular balance of NAD and NADP, and is a key enzyme in the biosynthesis of NADP. Catalyzes specifically the phosphorylation on 2'-hydroxyl of the adenosine moiety of NAD to yield NADP. The protein is NAD kinase 2 of Bacillus licheniformis (strain ATCC 14580 / DSM 13 / JCM 2505 / CCUG 7422 / NBRC 12200 / NCIMB 9375 / NCTC 10341 / NRRL NRS-1264 / Gibson 46).